The following is a 225-amino-acid chain: NAD(P)H-quinone oxidoreductase subunit K, chloroplastic (225 aa).

[4Fe-4S] cluster-binding residues include Cys-43, Cys-44, Cys-108, and Cys-139.

It belongs to the complex I 20 kDa subunit family. In terms of assembly, NDH is composed of at least 16 different subunits, 5 of which are encoded in the nucleus. [4Fe-4S] cluster serves as cofactor.

The protein localises to the plastid. It localises to the chloroplast thylakoid membrane. The enzyme catalyses a plastoquinone + NADH + (n+1) H(+)(in) = a plastoquinol + NAD(+) + n H(+)(out). The catalysed reaction is a plastoquinone + NADPH + (n+1) H(+)(in) = a plastoquinol + NADP(+) + n H(+)(out). NDH shuttles electrons from NAD(P)H:plastoquinone, via FMN and iron-sulfur (Fe-S) centers, to quinones in the photosynthetic chain and possibly in a chloroplast respiratory chain. The immediate electron acceptor for the enzyme in this species is believed to be plastoquinone. Couples the redox reaction to proton translocation, and thus conserves the redox energy in a proton gradient. In Vitis vinifera (Grape), this protein is NAD(P)H-quinone oxidoreductase subunit K, chloroplastic.